Here is a 256-residue protein sequence, read N- to C-terminus: 6-carboxyhexanoate--CoA ligase (256 aa).

This sequence belongs to the BioW family. As to quaternary structure, homodimer. Mg(2+) is required as a cofactor.

It carries out the reaction heptanedioate + ATP + CoA = 6-carboxyhexanoyl-CoA + AMP + diphosphate. The protein operates within metabolic intermediate metabolism; pimeloyl-CoA biosynthesis; pimeloyl-CoA from pimelate: step 1/1. In terms of biological role, catalyzes the transformation of pimelate into pimeloyl-CoA with concomitant hydrolysis of ATP to AMP. This Bacillus velezensis (strain DSM 23117 / BGSC 10A6 / LMG 26770 / FZB42) (Bacillus amyloliquefaciens subsp. plantarum) protein is 6-carboxyhexanoate--CoA ligase.